A 640-amino-acid polypeptide reads, in one-letter code: LRR receptor kinase SERL2 (640 aa).

A signal peptide spans 1–22; that stretch reads MEPPFFLLLLLLVVSSSSPSAA. Residues 23-241 are Extracellular-facing; it reads LLSAKGVNNE…AARDRGHKFA (219 aa). Residues Asn94 and Asn107 are each glycosylated (N-linked (GlcNAc...) asparagine). 4 LRR repeats span residues 95-119, 120-143, 145-167, and 168-191; these read LTNLETVLLQNNNITGPIPAEIGRL, ENLKTLDLSSNSFYGEIPSSVGHL, SLQYLRLNNNTLSGPFPSASANL, and SHLVFLDLSYNNLSGPIPESLART. Residues Asn153, Asn166, Asn179, and Asn222 are each glycosylated (N-linked (GlcNAc...) asparagine). Residues 242–262 form a helical membrane-spanning segment; the sequence is VAFGSTAGCMGLLLLAAGFLF. The Cytoplasmic portion of the chain corresponds to 263–640; the sequence is WWRHRRNRQI…VQAVELSGPR (378 aa). The Protein kinase domain occupies 304–583; the sequence is FSGKNILGKG…EGDGLADRWE (280 aa). Residues 310–318 and Lys332 contribute to the ATP site; that span reads LGKGGFGNV. The active-site Proton acceptor is Asp427.

This sequence belongs to the protein kinase superfamily. Ser/Thr protein kinase family. As to quaternary structure, interacts with MSBP1.

The protein localises to the cell membrane. It carries out the reaction L-seryl-[protein] + ATP = O-phospho-L-seryl-[protein] + ADP + H(+). The catalysed reaction is L-threonyl-[protein] + ATP = O-phospho-L-threonyl-[protein] + ADP + H(+). Its function is as follows. LRR receptor kinase that may be involved in defense response. The protein is LRR receptor kinase SERL2 of Oryza sativa subsp. japonica (Rice).